Consider the following 278-residue polypeptide: Protoheme IX farnesyltransferase (278 aa).

Transmembrane regions (helical) follow at residues 12-32 (VIWLLILSSVVGYVYAAGTVD), 36-56 (LAALTAAATLAVGGSAAFNHY), 72-92 (PLPAGAIPPSNALVYSLALSA), 105-124 (LPGVFVALGWFFYAVVYTVW), 130-150 (WLNILGGGFAGNATFLGGYAL), 157-177 (LPAVLISFAIYLWIPSHIWAL), 204-224 (AIISALNIASAAYILWLYLVF), 228-248 (LPGLALVLAGVAGTVATSALA), and 257-277 (MWRMYKASSPILTLFLLALVF).

Belongs to the UbiA prenyltransferase family. Protoheme IX farnesyltransferase subfamily.

The protein resides in the cell membrane. The enzyme catalyses heme b + (2E,6E)-farnesyl diphosphate + H2O = Fe(II)-heme o + diphosphate. Its pathway is porphyrin-containing compound metabolism; heme O biosynthesis; heme O from protoheme: step 1/1. Its function is as follows. Converts heme B (protoheme IX) to heme O by substitution of the vinyl group on carbon 2 of heme B porphyrin ring with a hydroxyethyl farnesyl side group. The protein is Protoheme IX farnesyltransferase of Pyrobaculum neutrophilum (strain DSM 2338 / JCM 9278 / NBRC 100436 / V24Sta) (Thermoproteus neutrophilus).